Here is a 333-residue protein sequence, read N- to C-terminus: 2-oxoglutarate-dependent dioxygenase ucsF (333 aa).

A Fe2OG dioxygenase domain is found at 174–296 (NASELRLNHY…RYSIAYLCKA (123 aa)). Fe cation-binding residues include His-202, Asp-204, and His-264. Position 287 (Arg-287) interacts with 2-oxoglutarate.

This sequence belongs to the iron/ascorbate-dependent oxidoreductase family. Requires Fe(2+) as cofactor.

The protein operates within mycotoxin biosynthesis. 2-oxoglutarate-dependent dioxygenase; part of the gene cluster that mediates the biosynthesis of UCS1025A, a member of the pyrrolizidinone family that acts as a strong telomerase inhibitor and displays potent antibacterial and antitumor properties. These compounds share a hemiaminal-containing pyrrolizidinone core fused with a gamma-lactone, giving a furopyrrolizidine that is connected to a decalin fragment. The polyketide synthase module (PKS) of the PKS-NRPS ucsA is responsible for the synthesis of the polyketide backbone via the condensation of an acetyl-CoA starter unit with 6 malonyl-CoA units. The downstream nonribosomal peptide synthetase (NRPS) module then amidates the carboxyl end of the polyketide with a 2S,3S-methylproline derived from L-isoleucine by the 2-oxoglutarate-dependent dioxygenase ucsF which converts L-isoleucine to (4S,5S)-4-methylpyrroline-5-carboxylate that is further converted to 2S,3S-methylproline by the pyrroline-5-carboxylate reductase ucsG. Reductive release of the completed aminoacyl polyketide from the assembly line can form the 3-pyrrolin-2-one structure via an intramolecular Knoevenagel reaction. Because ucsA lacks a designated enoylreductase (ER) domain, the required activity is provided the enoyl reductase ucsL. This keto acyclic precursor is the substrate of the Diels-Alderase ucsH, that catalyzes the Diels-Alder cycloaddition. Oxidation of the 3S-methyl group to a carboxylate by the cytochrome P450 monooxygenase ucsK allows an oxa-Michael cyclization that might involve the reductase/dehydrogenase ucsI and which furnishes the furopyrrolizidine. The oxidase ucsJ likely plays a critical role in stereoselective reduction of the C5-C6 double bond to afford the required R-configured carboxylate group. Further enolization and oxidation at C5 by an unidentified enzyme affords the last intermediate that can undergo oxa-Michael cyclization to yield UCS1025A. The chain is 2-oxoglutarate-dependent dioxygenase ucsF from Acremonium sp.